Here is a 524-residue protein sequence, read N- to C-terminus: Na(+)/H(+) antiporter NhaB (524 aa).

9 helical membrane-spanning segments follow: residues 13-33 (FLGN…IINP), 98-118 (LLLV…LFVF), 140-160 (AFLS…SVSV), 239-259 (FFIR…LVCL), 304-324 (AIIG…VGLV), 325-345 (GLSV…HSLG), 358-378 (LTVF…TPII), 448-468 (ATPN…APLI), and 479-499 (ALPY…FLLV).

It belongs to the NhaB Na(+)/H(+) (TC 2.A.34) antiporter family.

The protein localises to the cell inner membrane. It catalyses the reaction 2 Na(+)(in) + 3 H(+)(out) = 2 Na(+)(out) + 3 H(+)(in). Na(+)/H(+) antiporter that extrudes sodium in exchange for external protons. This is Na(+)/H(+) antiporter NhaB from Yersinia pestis (strain Pestoides F).